The following is a 200-amino-acid chain: Holliday junction branch migration complex subunit RuvA (200 aa).

Positions 1 to 63 (MIALVQGRVA…EDSLTLFGFA (63 aa)) are domain I. The interval 64–138 (DADERDVFEL…DRLGPAQGAA (75 aa)) is domain II. The flexible linker stretch occupies residues 138-142 (APAAP). The segment at 143-200 (VAVDDGADVVDALVGLGWPVRQAQDAVRGVLEDADGTAPDAAGLLRAALRSLAGDARG) is domain III.

Belongs to the RuvA family. In terms of assembly, homotetramer. Forms an RuvA(8)-RuvB(12)-Holliday junction (HJ) complex. HJ DNA is sandwiched between 2 RuvA tetramers; dsDNA enters through RuvA and exits via RuvB. An RuvB hexamer assembles on each DNA strand where it exits the tetramer. Each RuvB hexamer is contacted by two RuvA subunits (via domain III) on 2 adjacent RuvB subunits; this complex drives branch migration. In the full resolvosome a probable DNA-RuvA(4)-RuvB(12)-RuvC(2) complex forms which resolves the HJ.

The protein localises to the cytoplasm. Functionally, the RuvA-RuvB-RuvC complex processes Holliday junction (HJ) DNA during genetic recombination and DNA repair, while the RuvA-RuvB complex plays an important role in the rescue of blocked DNA replication forks via replication fork reversal (RFR). RuvA specifically binds to HJ cruciform DNA, conferring on it an open structure. The RuvB hexamer acts as an ATP-dependent pump, pulling dsDNA into and through the RuvAB complex. HJ branch migration allows RuvC to scan DNA until it finds its consensus sequence, where it cleaves and resolves the cruciform DNA. In Beutenbergia cavernae (strain ATCC BAA-8 / DSM 12333 / CCUG 43141 / JCM 11478 / NBRC 16432 / NCIMB 13614 / HKI 0122), this protein is Holliday junction branch migration complex subunit RuvA.